The sequence spans 462 residues: Threonine--tRNA ligase, mitochondrial (462 aa).

Residues Met-1–Arg-45 constitute a mitochondrion transit peptide.

Belongs to the class-II aminoacyl-tRNA synthetase family.

It is found in the mitochondrion matrix. The catalysed reaction is tRNA(Thr) + L-threonine + ATP = L-threonyl-tRNA(Thr) + AMP + diphosphate + H(+). The protein is Threonine--tRNA ligase, mitochondrial (MST1) of Saccharomyces cerevisiae (strain ATCC 204508 / S288c) (Baker's yeast).